A 457-amino-acid chain; its full sequence is Glutamate--tRNA ligase 1 (457 aa).

The 'HIGH' region signature appears at 9–19 (PSPTGYIHIGN). The short motif at 250–254 (GLSKR) is the 'KMSKS' region element. Lys253 is an ATP binding site.

Belongs to the class-I aminoacyl-tRNA synthetase family. Glutamate--tRNA ligase type 1 subfamily. As to quaternary structure, monomer.

The protein resides in the cytoplasm. The enzyme catalyses tRNA(Glu) + L-glutamate + ATP = L-glutamyl-tRNA(Glu) + AMP + diphosphate. In terms of biological role, catalyzes the attachment of glutamate to tRNA(Glu) in a two-step reaction: glutamate is first activated by ATP to form Glu-AMP and then transferred to the acceptor end of tRNA(Glu). This chain is Glutamate--tRNA ligase 1, found in Brucella ovis (strain ATCC 25840 / 63/290 / NCTC 10512).